Reading from the N-terminus, the 488-residue chain is Glutamyl-tRNA(Gln) amidotransferase subunit A (488 aa).

Active-site charge relay system residues include K77 and S152. S176 functions as the Acyl-ester intermediate in the catalytic mechanism.

The protein belongs to the amidase family. GatA subfamily. As to quaternary structure, heterotrimer of A, B and C subunits.

It carries out the reaction L-glutamyl-tRNA(Gln) + L-glutamine + ATP + H2O = L-glutaminyl-tRNA(Gln) + L-glutamate + ADP + phosphate + H(+). In terms of biological role, allows the formation of correctly charged Gln-tRNA(Gln) through the transamidation of misacylated Glu-tRNA(Gln) in organisms which lack glutaminyl-tRNA synthetase. The reaction takes place in the presence of glutamine and ATP through an activated gamma-phospho-Glu-tRNA(Gln). The protein is Glutamyl-tRNA(Gln) amidotransferase subunit A of Streptococcus pneumoniae (strain 70585).